We begin with the raw amino-acid sequence, 1446 residues long: E3 ubiquitin-protein ligase listerin (1446 aa).

11 HEAT repeats span residues 71 to 108, 115 to 153, 324 to 361, 363 to 399, 413 to 450, 630 to 669, 684 to 721, 1046 to 1083, 1107 to 1144, 1165 to 1202, and 1251 to 1289; these read QTRE…LTTD, MLTM…VTNG, SLQK…LLQK, ENPA…TFSD, EILK…WIIE, AENV…AEDE, GDFE…FCDA, LRAL…PAFQ, SVAR…KLSL, LLDL…NALN, and FKSM…RLLI. The segment at 1395–1442 adopts an RING-type zinc-finger fold; sequence CTICMMTVHQQTHQLPKIKCKQCKNKFHSNCLYKWFESSNQSTCPLCR.

The protein belongs to the LTN1 family. Component of the ribosome quality control complex (RQC), composed of at least the E3 ubiquitin ligase ltn1 and nemf. The complex probably also contains tcf25 as well as vcp/p97 and its ubiquitin-binding cofactors. RQC forms a stable complex with 60S ribosomal subunits.

Its subcellular location is the cytoplasm. It is found in the cytosol. The enzyme catalyses S-ubiquitinyl-[E2 ubiquitin-conjugating enzyme]-L-cysteine + [acceptor protein]-L-lysine = [E2 ubiquitin-conjugating enzyme]-L-cysteine + N(6)-ubiquitinyl-[acceptor protein]-L-lysine.. Its pathway is protein modification; protein ubiquitination. E3 ubiquitin-protein ligase. Component of the ribosome quality control complex (RQC), a ribosome-associated complex that mediates ubiquitination and extraction of incompletely synthesized nascent chains for proteasomal degradation. Ubiquitination leads to vcp/p97 recruitment for extraction and degradation of the incomplete translation product. The chain is E3 ubiquitin-protein ligase listerin from Caenorhabditis elegans.